We begin with the raw amino-acid sequence, 445 residues long: UNC93-like protein MFSD11 (445 aa).

A helical transmembrane segment spans residues 8 to 28 (LLNIVILGVGFMFMFTAFQTS). N-linked (GlcNAc...) asparagine glycosylation is present at asparagine 40. 4 helical membrane-spanning segments follow: residues 52–72 (LAII…VIAV), 74–94 (GCQM…AMFI), 98–118 (TWSF…LWTA), and 138–158 (IFWA…YLAW). An N-linked (GlcNAc...) asparagine glycan is attached at asparagine 163. 7 consecutive transmembrane segments (helical) span residues 170 to 190 (RTVF…FFLI), 239 to 259 (MLLL…YSGV), 277 to 297 (LIGL…GLFG), 309 to 329 (PVVI…YLYM), 343 to 363 (LSAF…LLGL), 385 to 405 (APAF…AFFY), and 415 to 435 (LLIL…VEWG).

The protein belongs to the unc-93 family.

Its subcellular location is the membrane. This is UNC93-like protein MFSD11 (mfsd11) from Xenopus laevis (African clawed frog).